Here is a 114-residue protein sequence, read N- to C-terminus: uncharacterized protein (114 aa).

This is an uncharacterized protein from Acanthamoeba polyphaga mimivirus (APMV).